The chain runs to 209 residues: Uracil phosphoribosyltransferase (209 aa).

5-phospho-alpha-D-ribose 1-diphosphate contacts are provided by residues arginine 79, arginine 104, and aspartate 131–serine 139. Uracil contacts are provided by residues isoleucine 194 and glycine 199–alanine 201. Aspartate 200 provides a ligand contact to 5-phospho-alpha-D-ribose 1-diphosphate.

This sequence belongs to the UPRTase family. Mg(2+) serves as cofactor.

It catalyses the reaction UMP + diphosphate = 5-phospho-alpha-D-ribose 1-diphosphate + uracil. It functions in the pathway pyrimidine metabolism; UMP biosynthesis via salvage pathway; UMP from uracil: step 1/1. Allosterically activated by GTP. Catalyzes the conversion of uracil and 5-phospho-alpha-D-ribose 1-diphosphate (PRPP) to UMP and diphosphate. In Streptococcus pyogenes serotype M1, this protein is Uracil phosphoribosyltransferase.